The sequence spans 949 residues: Valine--tRNA ligase (949 aa).

The 'HIGH' region motif lies at 40–50 (PNVTGSLHMGH). Positions 553–557 (KMSKS) match the 'KMSKS' region motif. Lys-556 lines the ATP pocket. A coiled-coil region spans residues 877-949 (MAGLIDKEAE…QEQQDKIKAL (73 aa)).

This sequence belongs to the class-I aminoacyl-tRNA synthetase family. ValS type 1 subfamily. Monomer.

It is found in the cytoplasm. The catalysed reaction is tRNA(Val) + L-valine + ATP = L-valyl-tRNA(Val) + AMP + diphosphate. Its function is as follows. Catalyzes the attachment of valine to tRNA(Val). As ValRS can inadvertently accommodate and process structurally similar amino acids such as threonine, to avoid such errors, it has a 'posttransfer' editing activity that hydrolyzes mischarged Thr-tRNA(Val) in a tRNA-dependent manner. In Idiomarina loihiensis (strain ATCC BAA-735 / DSM 15497 / L2-TR), this protein is Valine--tRNA ligase.